Reading from the N-terminus, the 822-residue chain is Microcephalin (822 aa).

Positions 10–99 (AFLKDVVAYV…ALVDESLFPA (90 aa)) constitute a BRCT 1 domain. Disordered regions lie at residues 182–203 (MKEK…SQQN), 219–243 (PLSS…DQER), and 266–295 (SSFY…ESIN). Polar residues-rich tracts occupy residues 189–203 (LSPT…SQQN) and 219–235 (PLSS…SSFG). 3 positions are modified to phosphoserine: S273, S290, and S327. T329 carries the phosphothreonine modification. Disordered regions lie at residues 335–366 (EHQV…LKKR), 498–567 (NDSP…SPED), and 594–636 (TGYS…PTRT). Positions 522-541 (HPDTLSSSAHHITPLKGNST) are enriched in polar residues. Basic and acidic residues-rich tracts occupy residues 542-553 (ETRDPGDGKGSP) and 625-634 (KKSEKEEKPT). BRCT domains lie at 627 to 717 (SEKE…PFEL) and 738 to 820 (YQGT…NYQL).

In terms of assembly, interacts with CDC27 and maybe other components of the APC/C complex. Interacts with histone variant H2AX under DNA damage conditions. As to expression, high levels of expression are found in the developing forebrain and, in particular, in the walls of the lateral ventricles.

Its subcellular location is the cytoplasm. It localises to the cytoskeleton. It is found in the microtubule organizing center. The protein localises to the centrosome. Its function is as follows. Implicated in chromosome condensation and DNA damage induced cellular responses. May play a role in neurogenesis and regulation of the size of the cerebral cortex. The protein is Microcephalin of Mus musculus (Mouse).